The chain runs to 402 residues: Non-homologous end joining protein Ku (402 aa).

A Ku domain is found at 12 to 185 (ISFGLVTIPV…VAALTGIAQP (174 aa)). A disordered region spans residues 261 to 402 (QRAAGGATGG…GPDETAPGGP (142 aa)). Low complexity-rich tracts occupy residues 299–308 (GDPAASVPGV) and 332–343 (VPGVPATAVPGT). Positions 344–358 (PGAPVPTAPGVPSAP) are enriched in pro residues. Positions 359 to 376 (APGTSPTSVPGVQTAPNG) are enriched in low complexity.

It belongs to the prokaryotic Ku family. As to quaternary structure, homodimer. Interacts with LigD.

In terms of biological role, with LigD forms a non-homologous end joining (NHEJ) DNA repair enzyme, which repairs dsDNA breaks with reduced fidelity. Binds linear dsDNA with 5'- and 3'- overhangs but not closed circular dsDNA nor ssDNA. Recruits and stimulates the ligase activity of LigD. The protein is Non-homologous end joining protein Ku of Symbiobacterium thermophilum (strain DSM 24528 / JCM 14929 / IAM 14863 / T).